The sequence spans 700 residues: Elongation factor G (700 aa).

One can recognise a tr-type G domain in the interval 8–290 (ERYRNIGISA…AVVEYLPAPT (283 aa)). GTP-binding positions include 17–24 (AHIDAGKT), 88–92 (DTPGH), and 142–145 (NKMD).

Belongs to the TRAFAC class translation factor GTPase superfamily. Classic translation factor GTPase family. EF-G/EF-2 subfamily.

Its subcellular location is the cytoplasm. In terms of biological role, catalyzes the GTP-dependent ribosomal translocation step during translation elongation. During this step, the ribosome changes from the pre-translocational (PRE) to the post-translocational (POST) state as the newly formed A-site-bound peptidyl-tRNA and P-site-bound deacylated tRNA move to the P and E sites, respectively. Catalyzes the coordinated movement of the two tRNA molecules, the mRNA and conformational changes in the ribosome. This chain is Elongation factor G, found in Haemophilus influenzae (strain PittEE).